The chain runs to 4490 residues: MMKLYIDNAAPDKLKGLCIFFVRCRNDVAINVKTIQEEALFTVLDASKGLLNGIRDMLANIFLPAVLATNNWGALNQSKQGESEKHIFTETINRYLSFLDGARISIEGTVKLKTIDNVNFSKLHTFEEVTAAASNSETVHQLEEVLMVWYKQIEQVLIESEQMRKEAGDSGPLTELEHWKRMSAKFNYIIEQIKGPSCKAVINVLNVAHSKLLKNWRDLDARITDTANESKDNVRYLYTLEKVCQPLYNHDLVSMAHGIQNLINAIRMIHGVSRYYNTSERMTSLFIKVTNQMVTACKAYITDGGLNHVWDQETPVVLKKIQDCIFLFKEYQASFHKTRKLISESSGEKSFEVSEMYIFGKFEAFCKRLEKITEMITVVQTYSTLSNSTIEGIDIMAIKFRNIYQGVKKKQYDILDPRRTEFDTDFLDFMTKINGLEVQIQAFMNSSFGKILSSQQALQLLQRFQKLNIPCLGLEINHTIERILQYYVAELDATKKLYHSQKDDPPLARNMPPIAGKILWVRQLYRRISEPINYFFKNSDILSSPDGKAVIRQYNKISYVLVEFEVVYHTAWIREISQLHYALQATLFVRHPETGKLLVNFDPKILEVVRETKCMIKMKLDVPEQAKRLLKLESKLKADKLYLQGLLQYYDELCQEVPSVFVNLMTPKMKKVESVLRQGLTVLTWSSLTLESFFQEVELVLDMFNQLLKKISDLCEMHIDTVLKEIAKTVLISLPESGATKVEDMLTLNETYTKEWADILNHKSKHVEEAVRELISIFEQIYEVKYTGKVGKQSEQRKHVVFGSETGEGENNDYEANIVNEFDTHDKEDEFKKECKEVFAFFSHQLLDSLQKATRLSLDTMKRRIFVASLYGRKQSEDIISFIKSEVHLAIPNVVMIPSLDDIQQAINRMIQLTLEVSRGVAHWGQQQIRPIKSVIPSPTTTDVTHQNTGKLLKKEERSFEEAIPARKLKNFYPGVAEHKDISKLVLLLSSSVNSLRKAAHEALQDFQKYKTLWTEDRDVKVKEFLANNPSLTEIRSEILHYATFEQEIDELKPIIVVGALELHTEPMKLALSIEAKAWKMLLCRYLNEEYKKKMSYMIAFINEYLKKLSRPIRDLDDVRFAMEALSCIRDNEIQMDMTLGPIEEAYAILNRFEVEVTKEESEAVDTLRYSFNKLQSKAVSVQEDLVQVQPKFKSNLLESVEVFREDVINFAEAYELEGPMVPNIPPQEASNRLQIFQASFDDLWRKFVTYSSGEQLFGLPVTDYEVLHKTRKELNLLQKLYGLYDTVMSSISGYYEILWGDVDIEKINAELLEFQNRCRKLPKGLKDWQAFLDLKKRIDDFSESCPLLEMMTNKAMKQRHWDRISELTGTPFDVESDSFCLRNIMEAPLLKHKDDIEDICISAIKEKDIEAKLTQVIENWTNQNLSFAAFKGKGELLLKGTESGEIITLMEDSLMVLGSLLSNRYNAPFKKNIQNWVYKLSTSSDIIEEWLVVQNLWVYLEAVFVGGDIAKQLPQEAKRFQNIDKSWIKIMQRAHENPNVINCCVGDETMGQLLPHLHEQLEVCQKSLTGYLEKKRLLFPRFFFVSDPVLLEILGQASDSHTIQPHLPAVSDNINEVTFHAKDYDRIMAVISREGEKIVLDNSVMAKGPVEIWLLDLLKMQMSSLHNIIRSAFYQISDSGFQLLPFLSHFPAQVGLLGIQMLWTHDSEEALRNAKDDRKIMQVTNQKFLDILNTLISQTTHDLSKFDRVKFETLITIHVHQRDIFDDLVKMHIKSPTDFEWLKQSRFYFKEDLDQTVVSITDVDFIYQNEFLGCTDRLVITPLTDRCYITLAQALGMNMGGAPAGPAGTGKTETTKDMGRCLGKYVVVFNCSDQMDFRGLGRIFKGLAQSGSWGCFDEFNRIELPVLSVAAQQIYIVLTARKERKKQFIFSDGDCVDLNPEFGIFLTMNPGYAGRQELPENLKIQFRTVAMMVPDRQIIMRVKLASCGFLENVILAQKFYVLYKLCEEQLTKQVHYDFGLRNILSVLRTLGSQKRARPEDSELSIVMRGLRDMNLSKLVDEDEPLFLSLINDLFPGLQLDSNTYAELQNAVAHQVQIEGLINHPPWNLKLVQLYETSLVRHGLMTLGPSGSGKTTVITILMKAQTECGRPHREMRMNPKAITAPQMFGRLDTATNDWTDGIFSTLWRKTLKAKKGENIFLILDGPVDAIWIENLNSVLDDNKTLTLANGDRIPMAPSCKLLFEVHNIENASPATVSRMGMVYISSSALSWRPILQAWLKKRTAQEAAVFLTLYEKVFEDTYTYMKLNLNPKMQLLECNYIVQSLNLLEGLIPSKEEGGVSCVEHLHKLFVFGLMWSLGALLELESREKLEAFLRQHESKLDLPEIPKGSNQTMYEFYVTDYGDWEHWNKKLQPYYYPTDSIPEYSSILVPNVDNIRTNFLIDTIAKQHKAVLLTGEQGTAKTVMVKAYLKKYDPEVQLSKSLNFSSATEPMMFQRTIESYVDKRIGSTYGPPGGRKMTVFIDDINMPVINEWGDQITNEIVRQMMEMEGMYSLDKPGDFTTIVDVQLIAAMIHPGGGRNDIPQRLKRQFTVFNCTLPSNASIDKIFGIIGCGYFDPCRSFKPQICEMIVNLVSVGRVLWQWTKVKMLPTPSKFHYIFNLRDLSRIWQGMLTIKAEECASIPTLLSLFKHECSRVIADRFITPEDEQWFNAHLTRAVEENIGSDAASCILPEPYFVDFLREMPEPTGDEPEDSVFEVPKIYELMPSFDFLAEKLQFYQRQFNEIIRGTSLDLVFFKDAMTHLIKISRIIRTSCGNALLVGVGGSGKQSLSRLASFIAGYQIFQITLTRSYNVTNLTDDLKALYKVAGADGKGITFIFTDSEIKDEAFLEYLNNLLSSGEISNLFARDEMDEITQGLISVMKRELPRHPPTFDNLYEYFISRSRKNLHVVLCFSPVGEKFRARSLKFPGLISGCTMDWFSRWPREALIAVASYFLSDYNIVCSSEIKRQVVETMGLFHDMVSESCESYFQRYRRRAHVTPKSYLSFINGYKNIYAEKVKFINEQAERMNIGLDKLMEASESVAKLSQDLAVKEKELAVASIKADEVLAEVTVSAQASAKIKNEVQEVKDKAQKIVDEIDSEKVKAESKLEAAKPALEEAEAALNTIKPNDIATVRKLAKPPHLIMRIMDCVLLLFQKKIDPVTMDPEKSCCKPSWGESLKLMSATGFLWSLQQFPKDTINEETVELLQPYFNMDDYTFESAKKVCGNVAGLLSWTLAMAIFYGINREVLPLKANLAKQEGRLAVANAELGKAQALLDEKQAELDKVQAKFDAAMNEKMDLLNDADTCRKKMQAASTLIDGLSGEKIRWTQQSKEFKAQINRLVGDILLCTGFLSYLGPFNQIFRNYLLKDQWEMELRARKIPFTENLNLISMLVDPPTIGEWGLQGLPGDDLSIQNGIIVTKATRYPLLIDPQTQGKTWIKSKEKENDLQVTSLNHKYFRTHLEDSLSLGRPLLIEDIHEELDPALDNVLEKNFIKSGTTFKVKVGDKECDIMDTFKLYITTKLPNPAFTPEINAKTSVIDFTVTMKGLENQLLRRVILTEKQELEAERVKLLEDVTFNKRKMKELEDNLLYKLSATKGSLVDDESLIGVLRTTKQTAAEVSEKLHVAAETEIKINAAQEEFRPAATRGSILYFLITEMSMVNIMYQTSLAQFLKLFDQSMARSEKSPLPQKRITNIIEYLTYEVFTYSVRGLYENHKFLFVLLMTLKIDLQRGTVKHREFQALIKGGAALDLKACPPKPYRWILDMTWLNLVELSKLPQFAEIMNQISRNEKGWKSWFDKDAPEEEIIPDGYNDSLDTCHKLLLIRSWCPDRTVFQARKYIADSLEEKYTEPVILNLEKTWEESDTRTPLICFLSMGSDPTNQIDALAKKLKLECRTISMGQGQEVHARKLIQMSMQQGGWVLLQNCHLGLEFMEELLETLITTEASDDSFRVWITTEPHDRFPITLLQTSLKFTNEPPQGVRAGLKRTFAGINQDLLDISNLPMWKPMLYTVAFLHSTVQERRKFGPLGWNIPYEFNSADFSASVQFIQNHLDECDIKKGVSWNTVRYMIGEVQYGGRVTDDFDKRLLNCFARVWFSEKMFEPSFCFYTGYKIPLCKTLDQYFEYIQSLPSLDNPEVFGLHPNADITYQSNTASAVLETITNIQPKESGGGVGETREAIVYRLSEDMLSKLPPDYIPHEVKSRLIKMGHLNSMNIFLRQEIDRMQRVISILRSSLSDLKLAIEGTIIMSENLRDALDNMYDARIPQLWKRVSWDSSTLGFWFTELLERNAQFSTWIFEGRPNVFWMTGFFNPQGFLTAMRQEVTRAHKGWALDTVTIHNEVLRQTKEEITSPPGEGVYIYGLYMDGAAWDRRNGKLMESTPKVLFTQLPVLHIFAINSTAPKDPKLYVCPIYKKPRRTDLTFITVVYLRTVLSPDHWILRGVALLCDIK.

The residue at position 674 (S674) is a Phosphoserine. AAA stretches follow at residues 1808–2030 (YQNE…VLRT), 2090–2309 (NAVA…KLNL), 2416–2669 (YYPT…IWQG), and 2780–3034 (QFNE…YRRR). ATP-binding positions include 1846 to 1853 (GPAGTGKT) and 2128 to 2135 (GPSGSGKT). A stalk region spans residues 3049–3346 (YKNIYAEKVK…MDLLNDADTC (298 aa)). Coiled coils occupy residues 3072–3164 (DKLM…ALNT), 3290–3354 (LKAN…QAAS), and 3594–3630 (RRVI…DNLL). AAA stretches follow at residues 3432 to 3662 (LVDP…EVSE) and 3877 to 4091 (ARKY…FIQN).

Belongs to the dynein heavy chain family. In terms of assembly, consists of at least two heavy chains and a number of intermediate and light chains. As to expression, expressed in spermatozoa (at protein level). Not detected in airway epithelial cells (at protein level).

The protein resides in the cytoplasm. It is found in the cytoskeleton. The protein localises to the flagellum axoneme. Force generating protein component of the outer dynein arms (ODAs) in the sperm flagellum. Produces force towards the minus ends of microtubules. Dynein has ATPase activity; the force-producing power stroke is thought to occur on release of ADP. Involved in sperm motility; implicated in sperm flagellar assembly. This chain is Dynein axonemal heavy chain 8, found in Homo sapiens (Human).